The following is a 256-amino-acid chain: Small ribosomal subunit protein eS1 (256 aa).

Alanine 2 is modified (N-acetylalanine; partial).

It belongs to the eukaryotic ribosomal protein eS1 family. As to quaternary structure, component of the small ribosomal subunit. Mature ribosomes consist of a small (40S) and a large (60S) subunit. The 40S subunit contains about 33 different proteins and 1 molecule of RNA (18S). The 60S subunit contains about 49 different proteins and 3 molecules of RNA (25S, 5.8S and 5S).

The protein resides in the cytoplasm. This chain is Small ribosomal subunit protein eS1, found in Postia placenta (strain ATCC 44394 / Madison 698-R) (Brown rot fungus).